The sequence spans 682 residues: ATP-dependent zinc metalloprotease FtsH (682 aa).

The Cytoplasmic portion of the chain corresponds to 1–7 (MKQSHKT). Residues 8–28 (ILLWALLIFLFVMIYNLISDG) form a helical membrane-spanning segment. Residues 29-138 (TSGEETLDTT…YEVKAKEEST (110 aa)) lie on the Periplasmic side of the membrane. The helical transmembrane segment at 139–159 (FWQSLLISWLPMLLLFALFFF) threads the bilayer. Residues 160–682 (FMRQLQAGGG…SGTDPEPEPA (523 aa)) lie on the Cytoplasmic side of the membrane. 232–239 (GPPGTGKT) lines the ATP pocket. His454 serves as a coordination point for Zn(2+). Glu455 is an active-site residue. The Zn(2+) site is built by His458 and Asp531. The segment at 638-682 (LSRPAVVSKPSADAESSVDEDEREARPALFPPLGKSGTDPEPEPA) is disordered.

In the central section; belongs to the AAA ATPase family. This sequence in the C-terminal section; belongs to the peptidase M41 family. As to quaternary structure, homohexamer. The cofactor is Zn(2+).

Its subcellular location is the cell inner membrane. In terms of biological role, acts as a processive, ATP-dependent zinc metallopeptidase for both cytoplasmic and membrane proteins. Plays a role in the quality control of integral membrane proteins. The protein is ATP-dependent zinc metalloprotease FtsH of Haliangium ochraceum (strain DSM 14365 / JCM 11303 / SMP-2).